A 302-amino-acid chain; its full sequence is Ribosomal RNA small subunit methyltransferase H (302 aa).

Residues 36 to 38, Asp56, Phe84, Asp99, and Gln106 contribute to the S-adenosyl-L-methionine site; that span reads GGH.

The protein belongs to the methyltransferase superfamily. RsmH family.

It is found in the cytoplasm. The catalysed reaction is cytidine(1402) in 16S rRNA + S-adenosyl-L-methionine = N(4)-methylcytidine(1402) in 16S rRNA + S-adenosyl-L-homocysteine + H(+). Functionally, specifically methylates the N4 position of cytidine in position 1402 (C1402) of 16S rRNA. This chain is Ribosomal RNA small subunit methyltransferase H, found in Christiangramia forsetii (strain DSM 17595 / CGMCC 1.15422 / KT0803) (Gramella forsetii).